We begin with the raw amino-acid sequence, 101 residues long: Iron-sulfur cluster assembly protein CyaY (101 aa).

This sequence belongs to the frataxin family.

Functionally, involved in iron-sulfur (Fe-S) cluster assembly. May act as a regulator of Fe-S biogenesis. The polypeptide is Iron-sulfur cluster assembly protein CyaY (Haemophilus influenzae (strain 86-028NP)).